The sequence spans 607 residues: Autophagy-related protein 22-2 (607 aa).

Residues 9 to 31 (FQSPSPDEGVQQRPPRYVGEDTT) are disordered. The chain crosses the membrane as a helical span at residues 44–64 (YGIAAEVFAVCGVGSFLPLTL). Residues Asn88 and Asn91 are each glycosylated (N-linked (GlcNAc...) asparagine). 3 helical membrane passes run 111–131 (SFAM…LISF), 143–160 (TLLM…MLFV), and 161–178 (FIAP…VVGV). The tract at residues 203–263 (QEGKADDGTE…GMGTKAPLSS (61 aa)) is disordered. A glycan (N-linked (GlcNAc...) asparagine) is linked at Asn235. 8 consecutive transmembrane segments (helical) span residues 277–297 (GIGL…IMLL), 310–330 (TLPM…FTLV), 381–401 (VLIF…VSGT), 415–435 (PLIG…AFLW), 450–470 (IILC…AYIP), 484–504 (WEIF…ASYC), 521–543 (YALY…GGIV), and 552–572 (GFFF…MVNA). The segment at 585–607 (TLGKSHGGPAEDAQEAEGLLARE) is disordered.

Belongs to the ATG22 family.

The protein localises to the vacuole membrane. In terms of biological role, vacuolar effluxer which mediate the efflux of amino acids resulting from autophagic degradation. The release of autophagic amino acids allows the maintenance of protein synthesis and viability during nitrogen starvation. The chain is Autophagy-related protein 22-2 (atg22-2) from Penicillium rubens (strain ATCC 28089 / DSM 1075 / NRRL 1951 / Wisconsin 54-1255) (Penicillium chrysogenum).